The sequence spans 335 residues: Teichoic acids export ATP-binding protein TagH (335 aa).

An ABC transporter domain is found at 26–246 (IKGLFMPKSQ…YDEFVKWFNK (221 aa)). Residue 60 to 67 (GINGSGKS) coordinates ATP.

It belongs to the ABC transporter superfamily. Teichoic acids exporter (TC 3.A.1.104.1) family. In terms of assembly, the complex is composed of two ATP-binding proteins (TagH) and two transmembrane proteins (TagG).

The protein localises to the cell membrane. It catalyses the reaction ATP + H2O + teichoic acidSide 1 = ADP + phosphate + teichoic acidSide 2.. Part of the ABC transporter complex TagGH involved in teichoic acids export. Responsible for energy coupling to the transport system. This chain is Teichoic acids export ATP-binding protein TagH, found in Listeria innocua serovar 6a (strain ATCC BAA-680 / CLIP 11262).